The following is a 256-amino-acid chain: H-2 class II histocompatibility antigen, A-K alpha chain (256 aa).

The N-terminal stretch at 1-23 is a signal peptide; it reads MPRSRALILGVLALTTMLSLCGG. Residues 24–111 are alpha-1; it reads EDDIEADHVG…KRSNSTPATN (88 aa). Residues 24-218 are Extracellular-facing; sequence EDDIEADHVG…IPAPMSELTE (195 aa). 2 N-linked (GlcNAc...) asparagine glycosylation sites follow: N105 and N145. Residues 112–205 are alpha-2; the sequence is EAPQATVFPK…GLEEPVLKHW (94 aa). One can recognise an Ig-like C1-type domain in the interval 114–206; sequence PQATVFPKSP…LEEPVLKHWE (93 aa). A disulfide bond links C134 and C190. The connecting peptide stretch occupies residues 206 to 218; the sequence is EPEIPAPMSELTE. The helical transmembrane segment at 219-241 threads the bilayer; the sequence is TVVCALGLSVGLVGIVVGTIFII. Topologically, residues 242-256 are cytoplasmic; it reads QGLRSGGTSRHPGPL.

It belongs to the MHC class II family.

Its subcellular location is the membrane. In Mus musculus (Mouse), this protein is H-2 class II histocompatibility antigen, A-K alpha chain (H2-Aa).